Here is a 513-residue protein sequence, read N- to C-terminus: Probable DNA ligase (513 aa).

Glu-213 is a binding site for ATP. Lys-215 serves as the catalytic N6-AMP-lysine intermediate. ATP contacts are provided by Arg-220, Arg-235, Glu-264, Phe-304, Arg-376, and Lys-382.

Belongs to the ATP-dependent DNA ligase family. Mg(2+) is required as a cofactor.

It catalyses the reaction ATP + (deoxyribonucleotide)n-3'-hydroxyl + 5'-phospho-(deoxyribonucleotide)m = (deoxyribonucleotide)n+m + AMP + diphosphate.. In terms of biological role, DNA ligase that seals nicks in double-stranded DNA during DNA replication, DNA recombination and DNA repair. The sequence is that of Probable DNA ligase from Anaeromyxobacter sp. (strain K).